Here is a 296-residue protein sequence, read N- to C-terminus: NAD kinase (296 aa).

Residue Asp78 is the Proton acceptor of the active site. NAD(+)-binding positions include 78 to 79 (DG), 152 to 153 (ND), Arg180, Asp182, and Gln251.

This sequence belongs to the NAD kinase family. A divalent metal cation serves as cofactor.

It is found in the cytoplasm. The catalysed reaction is NAD(+) + ATP = ADP + NADP(+) + H(+). Its function is as follows. Involved in the regulation of the intracellular balance of NAD and NADP, and is a key enzyme in the biosynthesis of NADP. Catalyzes specifically the phosphorylation on 2'-hydroxyl of the adenosine moiety of NAD to yield NADP. The sequence is that of NAD kinase from Neisseria meningitidis serogroup C (strain 053442).